The chain runs to 504 residues: Potassium voltage-gated channel subfamily V member 1 (504 aa).

2 disordered regions span residues 1–22 (MDLS…GGSL) and 172–193 (KKDT…QGPC). Residues 1–214 (MDLSPRNRPL…EKPGSSTAAR (214 aa)) are Cytoplasmic-facing. Low complexity predominate over residues 10–22 (LLESSSLDSGGSL). Basic and acidic residues predominate over residues 172-185 (KKDTDDQESQHESE). A helical transmembrane segment spans residues 215–235 (IFGVISIIFVAVSIVNMALMS). Over 236–242 (AELSWLN) the chain is Extracellular. Residues 243-263 (LQLLEILEYVCISWFTGEFIL) traverse the membrane as a helical segment. The Cytoplasmic segment spans residues 264–280 (RFLCVKDRCRFLRKVPN). Residues 281-301 (IIDLLAILPFYITLLVESLSG) traverse the membrane as a helical segment. Topologically, residues 302–313 (SHTTQELENVGR) are extracellular. A helical; Voltage-sensor transmembrane segment spans residues 314–335 (LVQVLRLLRALRMLKLGRHSTG). At 336–349 (LRSLGMTITQCYEE) the chain is on the cytoplasmic side. A helical membrane pass occupies residues 350 to 370 (VGLLLLFLSVGISIFSTIEYF). The short motif at 396-401 (TVGYGD) is the Selectivity filter element. The chain crosses the membrane as a helical span at residues 411–431 (IVAFMCILSGILVLALPIAII). Over 432–504 (NDRFSACYFT…RSSGGDDFWF (73 aa)) the chain is Cytoplasmic.

It belongs to the potassium channel family. V (TC 1.A.1.2) subfamily. Kv8.1/KCNV1 sub-subfamily. As to quaternary structure, heteromultimer with KCNB1 and KCNB2. Interacts with KCNC4 and KCND1. In terms of tissue distribution, detected in brain, throughout layers II, IV and VI of the brain cortex. Detected in cerebellum and hippocampus, in the granule cell layer, Purkinje cell layer, pyramidal cell layer and dentate gyrus. Detected at lower levels in olfactory bulb, amygdala, thalamus, hypothalamus, midbrain and brainstem.

Its subcellular location is the cell membrane. Potassium channel subunit that does not form functional channels by itself. Modulates KCNB1 and KCNB2 channel activity by shifting the threshold for inactivation to more negative values and by slowing the rate of inactivation. Can down-regulate the channel activity of KCNB1, KCNB2, KCNC4 and KCND1, possibly by trapping them in intracellular membranes. The polypeptide is Potassium voltage-gated channel subfamily V member 1 (KCNV1) (Mesocricetus auratus (Golden hamster)).